The sequence spans 681 residues: Peroxisomal acyl-coenzyme A oxidase 2 (681 aa).

A phosphoserine mark is found at Ser3 and Ser9. Position 13 is a phosphothreonine (Thr13). 4 positions are modified to N6-succinyllysine: Lys66, Lys137, Lys453, and Lys561. The Microbody targeting signal motif lies at 679–681; the sequence is SKL.

This sequence belongs to the acyl-CoA oxidase family. As to quaternary structure, homodimer. FAD is required as a cofactor. In terms of tissue distribution, present in all tissues tested: heart, brain, placenta, lung, liver, skeletal muscle, kidney and pancreas. Most abundant in heart, liver and kidney.

The protein resides in the peroxisome. It catalyses the reaction (25R)-3alpha,7alpha,12alpha-trihydroxy-5beta-cholestan-26-oyl-CoA + A + H2O = (24R,25R)-3alpha,7alpha,12alpha,24-tetrahydroxy-5beta-cholestan-26-oyl-CoA + AH2. It carries out the reaction (25S)-3alpha,7alpha,12alpha-trihydroxy-5beta-cholestan-26-oyl-CoA + O2 = (24E)-3alpha,7alpha,12alpha-trihydroxy-5beta-cholest-24-en-26-oyl-CoA + H2O2. Oxidizes the CoA esters of the bile acid intermediates di- and tri-hydroxycholestanoic acids. Capable of oxidizing short as well as long chain 2-methyl branched fatty acids. The sequence is that of Peroxisomal acyl-coenzyme A oxidase 2 from Homo sapiens (Human).